The sequence spans 323 residues: Ribose import permease protein RbsC (323 aa).

The next 7 helical transmembrane spans lie at 21 to 41 (FIALIILIAIVSMINPDFFSV), 55 to 75 (AIIAVGMTFVILIAGIDLSVG), 95 to 115 (IFLVIPVVLLIGTLLGGISGV), 122 to 142 (VQAFIATLVTMTLLRGITMVY), 167 to 187 (VLGIPVPIWIMSIVFAVAWYI), 217 to 237 (IKVFVFAVSGFLSALAGLIVT), and 273 to 293 (VMGTLIGALIIGFLNNALNLL).

This sequence belongs to the binding-protein-dependent transport system permease family. AraH/RbsC subfamily. As to quaternary structure, the complex is composed of an ATP-binding protein (RbsA), two transmembrane proteins (RbsC) and a solute-binding protein (RbsB).

The protein resides in the cell inner membrane. Its function is as follows. Part of the ABC transporter complex RbsABC involved in ribose import. Probably responsible for the translocation of the substrate across the membrane. This is Ribose import permease protein RbsC (rbsC) from Haemophilus influenzae (strain ATCC 51907 / DSM 11121 / KW20 / Rd).